We begin with the raw amino-acid sequence, 25 residues long: Metallothionein (25 aa).

Cu(+) is bound by residues cysteine 3, cysteine 5, cysteine 11, cysteine 13, cysteine 18, cysteine 20, and cysteine 23.

It belongs to the metallothionein superfamily. Type 8 family.

Functionally, the metallothioneins are involved in the cellular sequestration of toxic metal ions. Binds six copper (cuprous) ions. In Agaricus bisporus (White button mushroom), this protein is Metallothionein.